A 299-amino-acid chain; its full sequence is tRNA-cytidine(32) 2-sulfurtransferase (299 aa).

The PP-loop motif signature appears at 56 to 61; sequence SGGKDS. Positions 131, 134, and 222 each coordinate [4Fe-4S] cluster.

The protein belongs to the TtcA family. In terms of assembly, homodimer. Mg(2+) is required as a cofactor. The cofactor is [4Fe-4S] cluster.

Its subcellular location is the cytoplasm. It catalyses the reaction cytidine(32) in tRNA + S-sulfanyl-L-cysteinyl-[cysteine desulfurase] + AH2 + ATP = 2-thiocytidine(32) in tRNA + L-cysteinyl-[cysteine desulfurase] + A + AMP + diphosphate + H(+). It participates in tRNA modification. In terms of biological role, catalyzes the ATP-dependent 2-thiolation of cytidine in position 32 of tRNA, to form 2-thiocytidine (s(2)C32). The sulfur atoms are provided by the cysteine/cysteine desulfurase (IscS) system. The polypeptide is tRNA-cytidine(32) 2-sulfurtransferase (Xylella fastidiosa (strain M12)).